We begin with the raw amino-acid sequence, 63 residues long: Disintegrin schistatin-like subunit B (63 aa).

The 63-residue stretch at 1–63 (NSVNPCCDPQ…TPDCPRNRYN (63 aa)) folds into the Disintegrin domain. Cystine bridges form between Cys-6–Cys-29, Cys-20–Cys-26, Cys-25–Cys-50, and Cys-38–Cys-57. The Cell attachment site signature appears at 42–44 (RGD).

The protein belongs to the disintegrin family. Dimeric disintegrin subfamily. In terms of assembly, heterodimer with subunit A; disulfide-linked. Expressed by the venom gland.

Its subcellular location is the secreted. Its function is as follows. May bind to both alpha-IIb/beta-3 (ITGA2B/ITGB3) and alpha-V/beta-3 (ITGAV/ITGB3) integrins, and may inhibit platelet aggregation. In Echis carinatus (Saw-scaled viper), this protein is Disintegrin schistatin-like subunit B.